The following is a 300-amino-acid chain: 4-hydroxy-tetrahydrodipicolinate synthase (300 aa).

Residue T56 participates in pyruvate binding. Y145 serves as the catalytic Proton donor/acceptor. K173 (schiff-base intermediate with substrate) is an active-site residue. Residue V215 coordinates pyruvate.

The protein belongs to the DapA family. As to quaternary structure, homotetramer; dimer of dimers.

It is found in the cytoplasm. It catalyses the reaction L-aspartate 4-semialdehyde + pyruvate = (2S,4S)-4-hydroxy-2,3,4,5-tetrahydrodipicolinate + H2O + H(+). The protein operates within amino-acid biosynthesis; L-lysine biosynthesis via DAP pathway; (S)-tetrahydrodipicolinate from L-aspartate: step 3/4. Catalyzes the condensation of (S)-aspartate-beta-semialdehyde [(S)-ASA] and pyruvate to 4-hydroxy-tetrahydrodipicolinate (HTPA). This chain is 4-hydroxy-tetrahydrodipicolinate synthase, found in Prochlorococcus marinus (strain AS9601).